Here is a 504-residue protein sequence, read N- to C-terminus: MFGEKFRDRQKPMVLVLGLGESGLAMARWCARHGCRLRIADTREVPPNLSALEAHGIEGNFVGGPFSEVLLEGVELVAISPGLSPLAADLVPLIATARERGIPVWGELEFFAQALKTLGESGYAPKVIAITGTNGKTTTTSLTGLLCERAGKKVAVAGNISPAALDKLTEAIDNTALPDVWVLELSSFQLETAHTFEPDAAVILNITQDHLDWHGGLDAYAAAKGKIFGKNTVRVLNRDDARVMTLASSEQSGAQLVTFGVNEPVRDGDYGLLRDNGMIWLVQAQDRDATDEPAPTRRRKSESTAPPDIGLKRLMPADALRIRGLHNATNALAAFALARAIGLPGAPLLHGLREYRGEPHRVELIASIEGVDYVDDSKGTNVGATVAALDGLAQRVVLIAGGDGKGQAFDPLAEPVTRWCRCVMLIGRDAPQIRAALEHTGIAITDHATLEEATRAASAVAQPGDAVLLSPACASFDMFKGYAHRAAVFRSTVEDIAAGRGTMI.

Glycine 132 to threonine 138 serves as a coordination point for ATP. The interval alanine 284–glycine 310 is disordered.

Belongs to the MurCDEF family.

The protein resides in the cytoplasm. It carries out the reaction UDP-N-acetyl-alpha-D-muramoyl-L-alanine + D-glutamate + ATP = UDP-N-acetyl-alpha-D-muramoyl-L-alanyl-D-glutamate + ADP + phosphate + H(+). The protein operates within cell wall biogenesis; peptidoglycan biosynthesis. Its function is as follows. Cell wall formation. Catalyzes the addition of glutamate to the nucleotide precursor UDP-N-acetylmuramoyl-L-alanine (UMA). This is UDP-N-acetylmuramoylalanine--D-glutamate ligase from Paraburkholderia phymatum (strain DSM 17167 / CIP 108236 / LMG 21445 / STM815) (Burkholderia phymatum).